Reading from the N-terminus, the 736-residue chain is Elongation factor 2 (736 aa).

Residues 18-234 (TRVRNIGIIA…VIDAYTASDK (217 aa)) enclose the tr-type G domain. Residues 27–34 (AHVDHGKT), 93–97 (DTPGH), and 147–150 (NKVD) contribute to the GTP site. His603 carries the diphthamide modification.

Belongs to the TRAFAC class translation factor GTPase superfamily. Classic translation factor GTPase family. EF-G/EF-2 subfamily.

It is found in the cytoplasm. Catalyzes the GTP-dependent ribosomal translocation step during translation elongation. During this step, the ribosome changes from the pre-translocational (PRE) to the post-translocational (POST) state as the newly formed A-site-bound peptidyl-tRNA and P-site-bound deacylated tRNA move to the P and E sites, respectively. Catalyzes the coordinated movement of the two tRNA molecules, the mRNA and conformational changes in the ribosome. The chain is Elongation factor 2 from Saccharolobus islandicus (strain Y.N.15.51 / Yellowstone #2) (Sulfolobus islandicus).